The chain runs to 762 residues: MKDIAIRGYCDRPSVATGETIRFYVSANETRGTFDAELVRLIHGDSNPAGPGYKEEAIKSDLEGQYPARFQRTQFGSYVEVADPDAGLQPDGAFSVHLFLWSTTPSRGRQGIASRWNDERQSGWNLAIEDGRVVFTIGDGSGATSSVVSDRPLFQQIWYSITGVYDPEKKQLRLYQKSVVNRTNSRFGLVVPLDSDCAVSADATVKAADSETSLLIAGLGEAAAQDGRTWCIAHYNGKVDAPKIYGCALGQDDAEKLSRGEIVRPISRLAHWDFSAGIGLNGIPTDHVVDASGNGHHGRCMNQPDRGSTGWNWDGHEENFIHCPEQYGALWFHEDCLDDCRWEKDFEFTVPEGLKSDFYAVKIRYEDTEDYIPFFVLPPRGTATAPILVIASTLSYLAYANEQIMHKADIGQAVAGHTPVLNENDVELHKNLSYYGLSTYDGHIDGRGVQYTSWRRPIMNLRPKHRQGFGSIWELPADLHLIDWLNHNGFEYDVATEHDLNDQGAELLRRYKVVLTGSHPEYQTWANADAWEDYLADGGRGMYLAANGMYWIVEVHPEKPWVMEVRKELGVTAWEAPPGEYHYSTNGRRGGRFRGRARATQKIWGTGMSSFGFDHSGYFVQMPDSQDERVAWIMEGIDPEERIGDGGLVGGGAGGYELDRYDLALGTPPNTLLLASSVEHSVVYTVIPDDKAFPHPGMNGGEHPFVRADITYFSTANGGGMFATSSISWLGSLSWNDYDNNVSKMTKNVLNQFIKDEPAPRV.

In terms of assembly, heterotetramer of two DmfA1 (alpha) and two DmfA2 (beta) subunits.

It catalyses the reaction N,N-dimethylformamide + H2O = dimethylamine + formate. With respect to regulation, activity is slightly inhibited by Mg(2+) and Mn(2+), and slightly increased by Cu(2+). Activity is slightly inhibited by the chelating agents 8-hydroxyquinoline, ethylenediaminetetraacetate, o-phenanthroline and 2,2'-bipyridyl. Its function is as follows. Hydrolyzes N,N-dimethylformamide, and to a lesser extent N,N-dimethylacetamide and N,N-diethylacetamide. Has no activity against the substituted amides N-methylformamide, N-ethylformamide, N-ethylformamide and N-methylacetamide or the unsubstituted amides formamide, nicotinamide, acetoamide, benzamide, acetamide and acrylamide. The polypeptide is N,N-dimethylformamidase beta subunit (Alcaligenes sp).